Reading from the N-terminus, the 215-residue chain is Serine acetyltransferase (215 aa).

It belongs to the transferase hexapeptide repeat family.

The protein localises to the cytoplasm. It carries out the reaction L-serine + acetyl-CoA = O-acetyl-L-serine + CoA. Its pathway is amino-acid biosynthesis; L-cysteine biosynthesis; L-cysteine from L-serine: step 1/2. This chain is Serine acetyltransferase (cysE), found in Staphylococcus aureus (strain MRSA252).